Here is a 103-residue protein sequence, read N- to C-terminus: Large ribosomal subunit protein eL42 (103 aa).

Residues Cys18 and Cys21 each coordinate Zn(2+). Residues 18 to 81 form a C4-type zinc finger; that stretch reads CPKCRTHTEH…TVLKLKCSKC (64 aa). Positions 40-62 are disordered; it reads LSEGERRYARKKKGYGSKRKPEQ. Basic residues predominate over residues 47-57; that stretch reads YARKKKGYGSK. The Zn(2+) site is built by Cys78 and Cys81.

This sequence belongs to the eukaryotic ribosomal protein eL42 family. In terms of assembly, part of the 50S ribosomal subunit. Zn(2+) is required as a cofactor.

Binds to the 23S rRNA. The polypeptide is Large ribosomal subunit protein eL42 (Desulfurococcus amylolyticus (strain DSM 18924 / JCM 16383 / VKM B-2413 / 1221n) (Desulfurococcus kamchatkensis)).